Reading from the N-terminus, the 360-residue chain is Phosphate acyltransferase (360 aa).

It belongs to the PlsX family. As to quaternary structure, homodimer. Probably interacts with PlsY.

The protein resides in the cytoplasm. The enzyme catalyses a fatty acyl-[ACP] + phosphate = an acyl phosphate + holo-[ACP]. Its pathway is lipid metabolism; phospholipid metabolism. Functionally, catalyzes the reversible formation of acyl-phosphate (acyl-PO(4)) from acyl-[acyl-carrier-protein] (acyl-ACP). This enzyme utilizes acyl-ACP as fatty acyl donor, but not acyl-CoA. In Janthinobacterium sp. (strain Marseille) (Minibacterium massiliensis), this protein is Phosphate acyltransferase.